A 282-amino-acid chain; its full sequence is Undecaprenyl-diphosphatase (282 aa).

A run of 5 helical transmembrane segments spans residues 90 to 110 (YRLG…GLFF), 121 to 141 (LWVV…AEYV), 194 to 214 (FGFL…LPDA), 228 to 248 (QLLV…AWLL), and 256 to 276 (MYWF…LLAT).

Belongs to the UppP family.

The protein resides in the cell membrane. It carries out the reaction di-trans,octa-cis-undecaprenyl diphosphate + H2O = di-trans,octa-cis-undecaprenyl phosphate + phosphate + H(+). Functionally, catalyzes the dephosphorylation of undecaprenyl diphosphate (UPP). Confers resistance to bacitracin. The sequence is that of Undecaprenyl-diphosphatase from Mycobacterium tuberculosis (strain ATCC 25618 / H37Rv).